Here is a 248-residue protein sequence, read N- to C-terminus: 14-3-3 protein (248 aa).

Coiled-coil stretches lie at residues 13–33 and 91–111; these read MAQL…MRKI and RQKI…LLQE. Position 135–136 (135–136) interacts with O-phospho-L-serine; that stretch reads RY. Thr-214 is modified (phosphothreonine). Residues 237 to 248 carry the Putative polyglycylation target motif (T/G)X0-1(D/E)X1-3-G(D/E)X1-2(gE)2-4, where X is polar or negatively charged amino acid, and gE is polyglycylated glutamine motif; that stretch reads TDSAGDDNAEEK. Glu-246 bears the 5-glutamyl polyglycine mark.

Belongs to the 14-3-3 family. In terms of assembly, homodimer. Homodimerizes via N-terminal domains. Oligomerizes forming homotrimers, homotetramers and protein filaments. Oligomerization is hindered by polyglycylation in vivo. Interacts with a large number of both cytosolic and membrane proteins in trophozoites and encysting parasites. Interacts with a serine/threonine protein kinase GL50803_112076 (gCDC7). Component of a multiprotein complex containing gCDC7 and GL50803_94117 (gDBF4), a regulatory subunit of gCDC7, during both the trophozoite and encysting stages of the parasite. Interacts with fructose-bisphosphate aldolase GL50803_11043 (gFBA), pyruvate kinase GL50803_17143 (gPyk), acetyl-CoA synthetase GL50803_13608 (gACS), protein kinase GL50803_22165 (gSTE), DEAD box RNA helicase GL50803_34684 (gVASA) and Golgi/cell cycle associated protein GL50803_17472 (gGCCA). Interacts with actin. Interacts with both monomeric phosphorylated and unphosphorylated actin. The interaction is enhanced by phosphorylation of actin and inhibited by Rho GTPase Rac. In terms of processing, phosphorylated constitutively throughout the life cycle. Phosphorylation is very high in trophozoites and encysting cells of 12 hours. Phosphorylated during excystation. Phosphorylation promotes its binding to various target proteins and is critical for encystation process. Phosphorylation modification is not influenced by polyglycylation modification. Post-translationally, polyglycylated on a glutamate residue, resulting in polyglycine chain on the gamma-carboxyl group. Polyglycylated by the tubulin--tyrosine ligase-like protein GL50803_8456 (gTTLL3). The polyglycine chain is shortened by metallopeptidases of the M20 family, namely dipeptidases GL50803_15832 (gDIP1) and GL50803_8407 (gDIP2). The length of the polyglycine chain is developmental stage-dependent. In trophozoites, glycine residues range from 10 to 31, with the greatest occurrence of 21 residues. In 12 hour encystation stage, glycine residues range from 6 to 22, with the greatest occurrence of 10 residues. The differential rate of polyglycylation/deglycylation during the encystation process regulates the intracellular localization of this protein. Relocalizes partially from the cytoplasm inside the nuclei following the shortening of the polyglycine chain in encysting cells. Polyglycylation modification is not influenced by phosphorylation modification. Polyglycylation prevents oligomerization in vivo.

The protein resides in the cytoplasm. It localises to the cytoskeleton. It is found in the nucleus. The protein localises to the cell projection. Its subcellular location is the cilium. The protein resides in the flagellum. It localises to the spindle. It is found in the nucleus envelope. The protein localises to the endoplasmic reticulum. In terms of biological role, adapter protein implicated in the regulation of a large spectrum of both general and specialized signaling pathways. Binds to a large number of partners, usually by recognition of a phosphoserine or phosphothreonine motif. Binding generally results in the modulation of the activity of the binding partner. Binds with varying affinity to various synthetic phosphopeptides having a consensus binding motif RSX(pS/pT)XP, called mode-1, where X is any residue and pS/pT is a phosphorylated serine/threonine, and to synthetic phosphopeptides having a consensus binding motif Xp(S/T)X1-2-COOH, called mode-3, in which the phosphorylated residue occupies the penultimate C-terminal position in the target protein, but does not bind to their unphosphorylated counterparts. Binds to synthetic human RAF1 phosphopeptides, but not to their unphosphorylated forms. Binds to difopein, a polypeptide containing a phosphorylation-independent binding motif. Involved in encystation. Involved in cell proliferation. Required for actin and tubulin cytoskeletal organization. Regulates actin filament formation and nuclear size. The polypeptide is 14-3-3 protein (Giardia intestinalis (strain ATCC 50803 / WB clone C6) (Giardia lamblia)).